Consider the following 632-residue polypeptide: MNQTQSYMDVHTSHFSSPQPYGSHGATAGGMVPYSHYQQPPPLLPPGSAGYPSTPGSYSYPYSNGVASTTQPASNSISSQVPAQILPLPAMTSHTVTPHGYVSGAAQSQQNAVHDPTGQTCPPGAKPRVTATLWEDEGSLCYQVEAKGVCVARREDNHMINGTKLLNVAGMTRGRRDGILKSEKVRHVVKIGPMHLKGVWIPYERALDFANKEKITDLLYPLFVHNIGGLLYHPANSNRTNMVVHDSQQRRLEGSQTARTSQGPQAPALHHHHSMNGSVPSHMPQASASTPQTNGRPELNRAHTFPTPPASASSLIGIPNQGSTYDWNSQNINSTVQTSQNVPIDNGLNSTRSMPTTPATTPPGNNLQGMPPYQNQPAYDSSKSYYSAAPSSQAQYASQPLPAHSLTYGQPMMKDLGSSGRPPLGPVEQEHDEVKVDRYNQPNGQVTNGTEEENGQQQEPEYVQDNVAGSYANRNSYTYTTNPSVSSLSGDHSQLGGSPSHQNGSDRMTPRTAGTNPPPQWSQGYNTPPRAVPAGSISNIVSDTRGAPNGDSYAPGTAYASNYSGYSSVNGSSMGSTKRMRDDDDDHLSRSDGRENEYETKRRKTLTEPPVGGAFMQMQQQPVPAGGVMRRR.

Residues 1–20 show a composition bias toward polar residues; the sequence is MNQTQSYMDVHTSHFSSPQP. A disordered region spans residues 1-27; it reads MNQTQSYMDVHTSHFSSPQPYGSHGAT. An HTH APSES-type domain is found at 128 to 234; sequence RVTATLWEDE…HNIGGLLYHP (107 aa). Residues 162-183 constitute a DNA-binding region (H-T-H motif); it reads GTKLLNVAGMTRGRRDGILKSE. 4 disordered regions span residues 246–315, 340–386, 403–460, and 473–632; these read DSQQ…ASSL, QNVP…KSYY, AHSL…QQEP, and NRNS…MRRR. Composition is skewed to polar residues over residues 254 to 264, 275 to 295, 340 to 354, and 364 to 376; these read GSQTARTSQGP, MNGS…QTNG, QNVP…TRSM, and GNNL…YQNQ. Over residues 377–386 the composition is skewed to low complexity; it reads PAYDSSKSYY. The segment covering 428-438 has biased composition (basic and acidic residues); the sequence is EQEHDEVKVDR. Residues 473–506 show a composition bias toward polar residues; sequence NRNSYTYTTNPSVSSLSGDHSQLGGSPSHQNGSD. Low complexity predominate over residues 558–576; that stretch reads AYASNYSGYSSVNGSSMGS. Residues 578–604 form a nuclear localization domain region; that stretch reads KRMRDDDDDHLSRSDGRENEYETKRRK. Residues 579–600 are compositionally biased toward basic and acidic residues; the sequence is RMRDDDDDHLSRSDGRENEYET.

The protein belongs to the EFG1/PHD1/stuA family.

The protein resides in the nucleus. In terms of biological role, transcription factor that regulates asexual reproduction. Binds the StuA-response elements (StRE) with the consensus sequence 5'-(A/T)CGCG(T/A)N(A/C)-3' at the promoters of target genes. Required for accurate spatial organization of the developing conidiophore. Primarily involved in the formation of the uninucleate sterigmata, which arise by budding in this multicellular structure. Required for metula and phialide formation during conidiation but is not required for dimorphic growth. The protein is Cell pattern formation-associated protein stuA of Talaromyces marneffei (Penicillium marneffei).